The chain runs to 552 residues: Urocanate hydratase (552 aa).

NAD(+) is bound by residues 49-50 (GG), Gln127, 173-175 (GMG), Asp193, 239-240 (NA), 260-264 (QTSAH), 270-271 (YI), and Tyr319. Residue Cys407 is part of the active site. Gly489 is an NAD(+) binding site.

Belongs to the urocanase family. Requires NAD(+) as cofactor.

Its subcellular location is the cytoplasm. The enzyme catalyses 4-imidazolone-5-propanoate = trans-urocanate + H2O. Its pathway is amino-acid degradation; L-histidine degradation into L-glutamate; N-formimidoyl-L-glutamate from L-histidine: step 2/3. Catalyzes the conversion of urocanate to 4-imidazolone-5-propionate. This Bacillus cereus (strain G9842) protein is Urocanate hydratase.